The chain runs to 470 residues: Tigger transposable element-derived protein 3 (470 aa).

One can recognise an HTH psq-type domain in the interval 3-55 (LNTKKKLHALSLAEKIQVLELLDESKMSQSEVARRFQVSQPQISRICKNKEKL). 2 consecutive DNA-binding regions (H-T-H motif) follow at residues 31–51 (QSEV…ICKN) and 100–130 (PMLL…WKRR). One can recognise an HTH CENPB-type domain in the interval 67–137 (ERKRKRESKY…KRRNNVGFGT (71 aa)). Residues 167-360 (FSPEDVFGCA…VPRQLILSSF (194 aa)) enclose the DDE-1 domain. Basic and acidic residues predominate over residues 402–421 (DPGPRVCKEETGTEDSGREE). Residues 402 to 426 (DPGPRVCKEETGTEDSGREEDGFEP) are disordered.

This sequence belongs to the tigger transposable element derived protein family.

The protein localises to the nucleus. This Mus musculus (Mouse) protein is Tigger transposable element-derived protein 3 (Tigd3).